The primary structure comprises 594 residues: MSASSQYDEFQAMLEQQKGIYLQQNSQLAKYNSSLMMKITDMETKVSELVQENVSLRSRLSMGELRYREKLNTVFQTLEDGIVEKFLQMNQLLTTVRESQGLESGIHDNPLKPILRGSNGISPRSAKKVEFTGANTTTKPVGFEDPIAEDNHENSGNSLELNDDEVRPLRKRRRKSSRRESLFIPADFEFNDEDPELELNQLPITEDEPPPSTAATSVPEEESQENKHTKEEREDEGKENVSTIPLVPVLPSVTNTGTECSNTNKNNTTEMETALAEDDSYNFTTSVIEYSIPEETSTHEHSHILLETSKSKIDVYNDREETNNNEADDSMNIVQCTIPSQSKIKHSMKHPRTKLKGGQDDIMPHTDYDKDDEKRERRTRGKAVNYKLPSLRAKMRRPTEKLVDATTVTDIHDLQVKRRNNQQQGIPSDDDDQEELLVPAGVPDTNVVIATVEEENRKEPPALPLHEIHLAQNVKPKIALKELSANAINRKVKTSTAVKAISHTKSRVLKDVKFNTLPTKQQAIENNSSDPNVSDENENSNVKPTRTKQATSDLAAFEIIDGISLKHVSRTHRVRAKEDMNKKRKRIHNDEISI.

Residues 38-61 are a coiled coil; sequence KITDMETKVSELVQENVSLRSRLS. 4 disordered regions span residues 104 to 178, 201 to 266, 342 to 380, and 519 to 549; these read SGIH…KSSR, QLPI…TNKN, SKIKHSMKHPRTKLKGGQDDIMPHTDYDKDDEKRERRTR, and TKQQAIENNSSDPNVSDENENSNVKPTRTKQ. A coiled-coil region spans residues 220-240; it reads EEESQENKHTKEEREDEGKEN. The span at 224–239 shows a compositional bias: basic and acidic residues; that stretch reads QENKHTKEEREDEGKE. The segment covering 252 to 261 has biased composition (polar residues); that stretch reads SVTNTGTECS. Positions 343–355 are enriched in basic residues; it reads KIKHSMKHPRTKL. Residues 357–376 are compositionally biased toward basic and acidic residues; it reads GGQDDIMPHTDYDKDDEKRE. 2 stretches are compositionally biased toward polar residues: residues 519–532 and 539–549; these read TKQQAIENNSSDPN and NSNVKPTRTKQ.

The protein belongs to the shugoshin family.

The protein localises to the nucleus. The protein resides in the chromosome. It is found in the centromere. Plays a central role in chromosome cohesion during cell division by preventing premature dissociation of cohesin complex from centromeres after prophase, when most of cohesin complex dissociates from chromosomes arms. The sequence is that of Shugoshin (SGO1) from Kluyveromyces lactis (strain ATCC 8585 / CBS 2359 / DSM 70799 / NBRC 1267 / NRRL Y-1140 / WM37) (Yeast).